A 62-amino-acid chain; its full sequence is Chymotrypsin inhibitor SCI-II (62 aa).

One can recognise a BPTI/Kunitz inhibitor domain in the interval 9–60; sequence CEQAFGNSGPCFAYIKLYSYNQKTKKCEEFIYGGCKGNDNRFDTLAECEQKC. 3 cysteine pairs are disulfide-bonded: cysteine 9/cysteine 60, cysteine 19/cysteine 43, and cysteine 35/cysteine 56.

Its function is as follows. Inhibits chymotrypsin and thus avoids the accidental chymotrypsin-mediated activation of prophenoloxidase. This enzyme is required by the insect immune system to produce melanin which is used to engulf foreign objects. Also inhibits trypsin weakly, this may be due to the presence of a pseudo-reactive bond in positions 44-45 (Lys-Gly). This is Chymotrypsin inhibitor SCI-II from Bombyx mori (Silk moth).